A 380-amino-acid chain; its full sequence is Probable protein phosphatase 2C 27 (380 aa).

The 261-residue stretch at 84 to 344 (RSGSCAEQGA…DNLTVIVVCF (261 aa)) folds into the PPM-type phosphatase domain. Mn(2+) contacts are provided by aspartate 128, glycine 129, aspartate 292, and aspartate 335.

This sequence belongs to the PP2C family. Requires Mg(2+) as cofactor. Mn(2+) is required as a cofactor. In terms of tissue distribution, expressed in roots, leaves, stems, flower, and trichomes.

The protein localises to the nucleus. The protein resides in the cytoplasm. The catalysed reaction is O-phospho-L-seryl-[protein] + H2O = L-seryl-[protein] + phosphate. It carries out the reaction O-phospho-L-threonyl-[protein] + H2O = L-threonyl-[protein] + phosphate. Its function is as follows. Confers salt tolerance by triggering the expression of stress-responsive genes. The chain is Probable protein phosphatase 2C 27 from Arabidopsis thaliana (Mouse-ear cress).